The primary structure comprises 477 residues: Glycogen synthase (477 aa).

K15 is an ADP-alpha-D-glucose binding site.

Belongs to the glycosyltransferase 1 family. Bacterial/plant glycogen synthase subfamily.

The catalysed reaction is [(1-&gt;4)-alpha-D-glucosyl](n) + ADP-alpha-D-glucose = [(1-&gt;4)-alpha-D-glucosyl](n+1) + ADP + H(+). It participates in glycan biosynthesis; glycogen biosynthesis. Synthesizes alpha-1,4-glucan chains using ADP-glucose. The sequence is that of Glycogen synthase from Shigella sonnei (strain Ss046).